Here is a 283-residue protein sequence, read N- to C-terminus: Thymidylate synthase (283 aa).

Arg-33 contributes to the dUMP binding site. His-63 lines the (6R)-5,10-methylene-5,6,7,8-tetrahydrofolate pocket. DUMP is bound at residue 138–139; the sequence is RR. The active-site Nucleophile is the Cys-158. DUMP-binding positions include 185 to 188, Asn-196, and 226 to 228; these read RSAD and HIY. Asp-188 contributes to the (6R)-5,10-methylene-5,6,7,8-tetrahydrofolate binding site. Ala-282 is a binding site for (6R)-5,10-methylene-5,6,7,8-tetrahydrofolate.

It belongs to the thymidylate synthase family. Bacterial-type ThyA subfamily. Homodimer.

The protein resides in the cytoplasm. The catalysed reaction is dUMP + (6R)-5,10-methylene-5,6,7,8-tetrahydrofolate = 7,8-dihydrofolate + dTMP. It participates in pyrimidine metabolism; dTTP biosynthesis. Catalyzes the reductive methylation of 2'-deoxyuridine-5'-monophosphate (dUMP) to 2'-deoxythymidine-5'-monophosphate (dTMP) while utilizing 5,10-methylenetetrahydrofolate (mTHF) as the methyl donor and reductant in the reaction, yielding dihydrofolate (DHF) as a by-product. This enzymatic reaction provides an intracellular de novo source of dTMP, an essential precursor for DNA biosynthesis. The chain is Thymidylate synthase from Methylibium petroleiphilum (strain ATCC BAA-1232 / LMG 22953 / PM1).